A 919-amino-acid chain; its full sequence is Translation initiation factor IF-2 (919 aa).

Basic and acidic residues predominate over residues 93–107 (MGKALPEEVPEKIAP). Disordered regions lie at residues 93 to 145 (MGKA…PAEP) and 158 to 279 (KIQP…RKGE). Over residues 136-145 (LAPPEKPAEP) the composition is skewed to pro residues. A compositionally biased stretch (basic and acidic residues) spans 158–171 (KIQPPEKFAEEPLK). A compositionally biased stretch (low complexity) spans 172-193 (KPAVIEPEKAAAAPKAVPGEAK). Basic and acidic residues-rich tracts occupy residues 194–203 (PLPRTERVQE) and 256–279 (GAPK…RKGE). The 170-residue stretch at 420 to 589 (PRAPVVTIMG…LLQADVLELK (170 aa)) folds into the tr-type G domain. Positions 429–436 (GHVDHGKT) are G1. 429–436 (GHVDHGKT) serves as a coordination point for GTP. Residues 454 to 458 (GITQA) form a G2 region. Residues 475–478 (DTPG) are G3. GTP-binding positions include 475 to 479 (DTPGH) and 529 to 532 (NKID). Positions 529 to 532 (NKID) are G4. The segment at 565–567 (SAK) is G5.

It belongs to the TRAFAC class translation factor GTPase superfamily. Classic translation factor GTPase family. IF-2 subfamily.

Its subcellular location is the cytoplasm. One of the essential components for the initiation of protein synthesis. Protects formylmethionyl-tRNA from spontaneous hydrolysis and promotes its binding to the 30S ribosomal subunits. Also involved in the hydrolysis of GTP during the formation of the 70S ribosomal complex. In Syntrophus aciditrophicus (strain SB), this protein is Translation initiation factor IF-2.